Consider the following 96-residue polypeptide: Co-chaperonin GroES (96 aa).

The protein belongs to the GroES chaperonin family. In terms of assembly, heptamer of 7 subunits arranged in a ring. Interacts with the chaperonin GroEL.

The protein resides in the cytoplasm. Its function is as follows. Together with the chaperonin GroEL, plays an essential role in assisting protein folding. The GroEL-GroES system forms a nano-cage that allows encapsulation of the non-native substrate proteins and provides a physical environment optimized to promote and accelerate protein folding. GroES binds to the apical surface of the GroEL ring, thereby capping the opening of the GroEL channel. The sequence is that of Co-chaperonin GroES from Paraburkholderia phytofirmans (strain DSM 17436 / LMG 22146 / PsJN) (Burkholderia phytofirmans).